Here is a 1226-residue protein sequence, read N- to C-terminus: uncharacterized protein (1226 aa).

The protein belongs to the Mg-chelatase subunit H family.

This is an uncharacterized protein from Methanocaldococcus jannaschii (strain ATCC 43067 / DSM 2661 / JAL-1 / JCM 10045 / NBRC 100440) (Methanococcus jannaschii).